A 378-amino-acid polypeptide reads, in one-letter code: Probable dihydroorotase-like protein (378 aa).

Belongs to the metallo-dependent hydrolases superfamily. DHOase family. PyrC' subfamily.

Functionally, non-functional DHOase. The polypeptide is Probable dihydroorotase-like protein (pyrC') (Helicobacter pylori (strain J99 / ATCC 700824) (Campylobacter pylori J99)).